The chain runs to 104 residues: Integration host factor subunit alpha (104 aa).

The protein belongs to the bacterial histone-like protein family. Heterodimer of an alpha and a beta chain.

In terms of biological role, this protein is one of the two subunits of integration host factor, a specific DNA-binding protein that functions in genetic recombination as well as in transcriptional and translational control. This chain is Integration host factor subunit alpha, found in Bartonella quintana (strain Toulouse) (Rochalimaea quintana).